The primary structure comprises 381 residues: Probable tRNA sulfurtransferase (381 aa).

The 109-residue stretch at 55–163 (GECLENLNKV…DDEAFIYHEK (109 aa)) folds into the THUMP domain. Residues 181-182 (LV), Lys265, Gly287, and Gln296 each bind ATP.

It belongs to the ThiI family.

It localises to the cytoplasm. It catalyses the reaction [ThiI sulfur-carrier protein]-S-sulfanyl-L-cysteine + a uridine in tRNA + 2 reduced [2Fe-2S]-[ferredoxin] + ATP + H(+) = [ThiI sulfur-carrier protein]-L-cysteine + a 4-thiouridine in tRNA + 2 oxidized [2Fe-2S]-[ferredoxin] + AMP + diphosphate. The catalysed reaction is [ThiS sulfur-carrier protein]-C-terminal Gly-Gly-AMP + S-sulfanyl-L-cysteinyl-[cysteine desulfurase] + AH2 = [ThiS sulfur-carrier protein]-C-terminal-Gly-aminoethanethioate + L-cysteinyl-[cysteine desulfurase] + A + AMP + 2 H(+). It functions in the pathway cofactor biosynthesis; thiamine diphosphate biosynthesis. Catalyzes the ATP-dependent transfer of a sulfur to tRNA to produce 4-thiouridine in position 8 of tRNAs, which functions as a near-UV photosensor. Also catalyzes the transfer of sulfur to the sulfur carrier protein ThiS, forming ThiS-thiocarboxylate. This is a step in the synthesis of thiazole, in the thiamine biosynthesis pathway. The sulfur is donated as persulfide by IscS. The polypeptide is Probable tRNA sulfurtransferase (Methanobrevibacter smithii (strain ATCC 35061 / DSM 861 / OCM 144 / PS)).